The chain runs to 491 residues: Protein nucleotidyltransferase YdiU (491 aa).

Residues glycine 94, glycine 96, arginine 97, lysine 117, aspartate 129, glycine 130, arginine 180, and arginine 187 each coordinate ATP. Aspartate 256 acts as the Proton acceptor in catalysis. 2 residues coordinate Mg(2+): asparagine 257 and aspartate 266. Residue aspartate 266 participates in ATP binding.

Belongs to the SELO family. The cofactor is Mg(2+). Requires Mn(2+) as cofactor.

The catalysed reaction is L-seryl-[protein] + ATP = 3-O-(5'-adenylyl)-L-seryl-[protein] + diphosphate. It catalyses the reaction L-threonyl-[protein] + ATP = 3-O-(5'-adenylyl)-L-threonyl-[protein] + diphosphate. The enzyme catalyses L-tyrosyl-[protein] + ATP = O-(5'-adenylyl)-L-tyrosyl-[protein] + diphosphate. It carries out the reaction L-histidyl-[protein] + UTP = N(tele)-(5'-uridylyl)-L-histidyl-[protein] + diphosphate. The catalysed reaction is L-seryl-[protein] + UTP = O-(5'-uridylyl)-L-seryl-[protein] + diphosphate. It catalyses the reaction L-tyrosyl-[protein] + UTP = O-(5'-uridylyl)-L-tyrosyl-[protein] + diphosphate. Functionally, nucleotidyltransferase involved in the post-translational modification of proteins. It can catalyze the addition of adenosine monophosphate (AMP) or uridine monophosphate (UMP) to a protein, resulting in modifications known as AMPylation and UMPylation. The polypeptide is Protein nucleotidyltransferase YdiU (Clostridium botulinum (strain Loch Maree / Type A3)).